A 159-amino-acid chain; its full sequence is Urease accessory protein UreE (159 aa).

Belongs to the UreE family.

It localises to the cytoplasm. Involved in urease metallocenter assembly. Binds nickel. Probably functions as a nickel donor during metallocenter assembly. The polypeptide is Urease accessory protein UreE (Acinetobacter baylyi (strain ATCC 33305 / BD413 / ADP1)).